Reading from the N-terminus, the 766-residue chain is MSVQSSSGSLEGPPSWSRLSTSPTPGSAAAARSLLNHTPPSGRPREGAMDELHSLDPRRQELLEARFTGVATGSTGSTGSCSVGAKASTNNESSNHSFGSLGSLSDKESETPEKKQSESSRGRKRKAESQNESSQGKSIGGRGHKISDYFEYQGGNGSSPVRGIPPAIRSPQNSHSHSTPSSSVRPNSPSPTALAFGDHPVVQPKQLSFKITQTDLTMLKLAALESTKNQDLEKKEGRIDDLLRANCDLRRQIDDQQKLLEKYKERLNKCISMSKKLLIEKSTQEKLSSREKSMQDRLRLGHFTTVRHGASFTEQWTDGFAFQNLVKQQEWVNQQREDIERQRKLLGKRKPPTANNSQAPATNSEAKQRKTKAVNGAENDPFVRPNLPQLLTLAEYHEQEEIFKLRLGHLKKEEAEIQAELERLERVRNLHIRELKRINNEDNSQFKDHPTLNERYLLLHLLGRGGFSEVYKAFDLYEQRYAAVKIHQLNKSWRDEKKENYHKHACREYRIHKELDHPRIVKLYDYFSLDTDTFCTVLEYCEGNDLDFYLKQHKLMSEKEARSIVMQIVNALRYLNEIKPPIIHYDLKPGNILLVDGTACGEIKITDFGLSKIMDDDSYGVDGMDLTSQGAGTYWYLPPECFVVGKEPPKISNKVDVWSVGVIFFQCLYGRKPFGHNQSQQDILQENTILKATEVQFPVKPVVSSEAKAFIRRCLAYRKEDRFDVHQLANDPYLLPHMRRSNSSGNLHMSGLTATPTPPSSSIITY.

The tract at residues 1–198 (MSVQSSSGSL…PSPTALAFGD (198 aa)) is disordered. A compositionally biased stretch (low complexity) spans 20-33 (STSPTPGSAAAARS). Phosphothreonine is present on T38. Over residues 43 to 64 (RPREGAMDELHSLDPRRQELLE) the composition is skewed to basic and acidic residues. Phosphoserine occurs at positions 54, 77, and 80. Low complexity predominate over residues 68–85 (TGVATGSTGSTGSCSVGA). The segment covering 87–103 (ASTNNESSNHSFGSLGS) has biased composition (polar residues). The segment covering 105–121 (SDKESETPEKKQSESSR) has biased composition (basic and acidic residues). S134, S159, S174, and S176 each carry phosphoserine. The span at 170–192 (SPQNSHSHSTPSSSVRPNSPSPT) shows a compositional bias: low complexity. Residues 229–280 (NQDLEKKEGRIDDLLRANCDLRRQIDDQQKLLEKYKERLNKCISMSKKLLIE) adopt a coiled-coil conformation. The interval 344-381 (KLLGKRKPPTANNSQAPATNSEAKQRKTKAVNGAENDP) is disordered. The span at 353 to 365 (TANNSQAPATNSE) shows a compositional bias: polar residues. The stretch at 397–445 (HEQEEIFKLRLGHLKKEEAEIQAELERLERVRNLHIRELKRINNEDNSQ) forms a coiled coil. A Protein kinase domain is found at 456–734 (YLLLHLLGRG…VHQLANDPYL (279 aa)). ATP is bound by residues 462-470 (LGRGGFSEV) and K485. The active-site Proton acceptor is D586. S743 is modified (phosphoserine). Residues 745–766 (GNLHMSGLTATPTPPSSSIITY) form a disordered region.

The protein belongs to the protein kinase superfamily. Ser/Thr protein kinase family. In terms of assembly, heterodimer with TLK2. Requires Mg(2+) as cofactor. Ubiquitously expressed in all tissues examined.

Its subcellular location is the nucleus. It carries out the reaction L-seryl-[protein] + ATP = O-phospho-L-seryl-[protein] + ADP + H(+). The catalysed reaction is L-threonyl-[protein] + ATP = O-phospho-L-threonyl-[protein] + ADP + H(+). Its activity is regulated as follows. Cell-cycle regulated, maximal activity in S-phase. Inactivated by phosphorylation at Ser-743, potentially by CHEK1. Its function is as follows. Rapidly and transiently inhibited by phosphorylation following the generation of DNA double-stranded breaks during S-phase. This is cell cycle checkpoint and ATM-pathway dependent and appears to regulate processes involved in chromatin assembly. Isoform 3 protects the cells from the ionizing radiation by facilitating the repair of DSBs. In vitro, phosphorylates histone H3 at 'Ser-10'. The polypeptide is Serine/threonine-protein kinase tousled-like 1 (Tlk1) (Mus musculus (Mouse)).